Here is a 368-residue protein sequence, read N- to C-terminus: Isopentenyl-diphosphate delta-isomerase (368 aa).

7 to 8 (RK) contributes to the substrate binding site. Residues threonine 65, 66 to 68 (GMT), serine 96, and asparagine 125 contribute to the FMN site. Position 96–98 (96–98 (SQR)) interacts with substrate. Glutamine 160 contributes to the substrate binding site. Glutamate 161 lines the Mg(2+) pocket. FMN-binding positions include lysine 193, serine 218, threonine 223, 275–277 (GIR), and 296–297 (AL).

Belongs to the IPP isomerase type 2 family. As to quaternary structure, homooctamer. Dimer of tetramers. The cofactor is FMN. Requires NADPH as cofactor. It depends on Mg(2+) as a cofactor.

The protein resides in the cytoplasm. It catalyses the reaction isopentenyl diphosphate = dimethylallyl diphosphate. Functionally, involved in the biosynthesis of isoprenoids. Catalyzes the 1,3-allylic rearrangement of the homoallylic substrate isopentenyl (IPP) to its allylic isomer, dimethylallyl diphosphate (DMAPP). The sequence is that of Isopentenyl-diphosphate delta-isomerase from Saccharolobus islandicus (strain L.S.2.15 / Lassen #1) (Sulfolobus islandicus).